Here is a 561-residue protein sequence, read N- to C-terminus: 2-succinyl-5-enolpyruvyl-6-hydroxy-3-cyclohexene-1-carboxylate synthase (561 aa).

The protein belongs to the TPP enzyme family. MenD subfamily. Homodimer. Mg(2+) serves as cofactor. The cofactor is Mn(2+). Thiamine diphosphate is required as a cofactor.

It carries out the reaction isochorismate + 2-oxoglutarate + H(+) = 5-enolpyruvoyl-6-hydroxy-2-succinyl-cyclohex-3-ene-1-carboxylate + CO2. The protein operates within quinol/quinone metabolism; 1,4-dihydroxy-2-naphthoate biosynthesis; 1,4-dihydroxy-2-naphthoate from chorismate: step 2/7. Its pathway is quinol/quinone metabolism; menaquinone biosynthesis. Its function is as follows. Catalyzes the thiamine diphosphate-dependent decarboxylation of 2-oxoglutarate and the subsequent addition of the resulting succinic semialdehyde-thiamine pyrophosphate anion to isochorismate to yield 2-succinyl-5-enolpyruvyl-6-hydroxy-3-cyclohexene-1-carboxylate (SEPHCHC). This chain is 2-succinyl-5-enolpyruvyl-6-hydroxy-3-cyclohexene-1-carboxylate synthase, found in Proteus mirabilis (strain HI4320).